Reading from the N-terminus, the 121-residue chain is Aspartate 1-decarboxylase (121 aa).

The active-site Schiff-base intermediate with substrate; via pyruvic acid is Ser-25. Ser-25 bears the Pyruvic acid (Ser) mark. Thr-57 contributes to the substrate binding site. The active-site Proton donor is the Tyr-58. 73–75 contributes to the substrate binding site; it reads GAA.

Belongs to the PanD family. Heterooctamer of four alpha and four beta subunits. Requires pyruvate as cofactor. Is synthesized initially as an inactive proenzyme, which is activated by self-cleavage at a specific serine bond to produce a beta-subunit with a hydroxyl group at its C-terminus and an alpha-subunit with a pyruvoyl group at its N-terminus.

The protein localises to the cytoplasm. It carries out the reaction L-aspartate + H(+) = beta-alanine + CO2. It participates in cofactor biosynthesis; (R)-pantothenate biosynthesis; beta-alanine from L-aspartate: step 1/1. Catalyzes the pyruvoyl-dependent decarboxylation of aspartate to produce beta-alanine. The protein is Aspartate 1-decarboxylase of Sulfurimonas denitrificans (strain ATCC 33889 / DSM 1251) (Thiomicrospira denitrificans (strain ATCC 33889 / DSM 1251)).